Here is a 273-residue protein sequence, read N- to C-terminus: Imidazole glycerol phosphate synthase subunit HisF (273 aa).

Active-site residues include Asp-11 and Asp-134.

Belongs to the HisA/HisF family. In terms of assembly, heterodimer of HisH and HisF.

It localises to the cytoplasm. The catalysed reaction is 5-[(5-phospho-1-deoxy-D-ribulos-1-ylimino)methylamino]-1-(5-phospho-beta-D-ribosyl)imidazole-4-carboxamide + L-glutamine = D-erythro-1-(imidazol-4-yl)glycerol 3-phosphate + 5-amino-1-(5-phospho-beta-D-ribosyl)imidazole-4-carboxamide + L-glutamate + H(+). Its pathway is amino-acid biosynthesis; L-histidine biosynthesis; L-histidine from 5-phospho-alpha-D-ribose 1-diphosphate: step 5/9. IGPS catalyzes the conversion of PRFAR and glutamine to IGP, AICAR and glutamate. The HisF subunit catalyzes the cyclization activity that produces IGP and AICAR from PRFAR using the ammonia provided by the HisH subunit. The protein is Imidazole glycerol phosphate synthase subunit HisF of Methanocella arvoryzae (strain DSM 22066 / NBRC 105507 / MRE50).